Consider the following 276-residue polypeptide: UDP-3-O-acyl-N-acetylglucosamine deacetylase (276 aa).

The Zn(2+) site is built by His-76, His-234, and Asp-238. Catalysis depends on His-261, which acts as the Proton donor.

The protein belongs to the LpxC family. Zn(2+) serves as cofactor.

The enzyme catalyses a UDP-3-O-[(3R)-3-hydroxyacyl]-N-acetyl-alpha-D-glucosamine + H2O = a UDP-3-O-[(3R)-3-hydroxyacyl]-alpha-D-glucosamine + acetate. The protein operates within glycolipid biosynthesis; lipid IV(A) biosynthesis; lipid IV(A) from (3R)-3-hydroxytetradecanoyl-[acyl-carrier-protein] and UDP-N-acetyl-alpha-D-glucosamine: step 2/6. Catalyzes the hydrolysis of UDP-3-O-myristoyl-N-acetylglucosamine to form UDP-3-O-myristoylglucosamine and acetate, the committed step in lipid A biosynthesis. The sequence is that of UDP-3-O-acyl-N-acetylglucosamine deacetylase from Synechocystis sp. (strain ATCC 27184 / PCC 6803 / Kazusa).